We begin with the raw amino-acid sequence, 145 residues long: Oocyte zinc finger protein XlCOF8.4I (145 aa).

Residues 1–25 (HKREADFCSKGNLTNPEISPVEHYP) form a disordered region. The C2H2-type zinc-finger motif lies at 123–145 (LSCSECGKCFSTYHVLARHQKTH).

It belongs to the krueppel C2H2-type zinc-finger protein family.

It localises to the nucleus. In terms of biological role, may be involved in transcriptional regulation. This Xenopus laevis (African clawed frog) protein is Oocyte zinc finger protein XlCOF8.4I.